The sequence spans 142 residues: Large ribosomal subunit protein uL13 (142 aa).

It belongs to the universal ribosomal protein uL13 family. As to quaternary structure, part of the 50S ribosomal subunit.

In terms of biological role, this protein is one of the early assembly proteins of the 50S ribosomal subunit, although it is not seen to bind rRNA by itself. It is important during the early stages of 50S assembly. This is Large ribosomal subunit protein uL13 from Salmonella agona (strain SL483).